The primary structure comprises 89 residues: Small ribosomal subunit protein uS17 (89 aa).

It belongs to the universal ribosomal protein uS17 family. In terms of assembly, part of the 30S ribosomal subunit.

One of the primary rRNA binding proteins, it binds specifically to the 5'-end of 16S ribosomal RNA. The sequence is that of Small ribosomal subunit protein uS17 from Variovorax paradoxus (strain S110).